The sequence spans 147 residues: Catabolic 3-dehydroquinase 2 (147 aa).

The active-site Proton acceptor is Tyr-23. 3 residues coordinate substrate: Asn-74, His-80, and Asp-87. His-100 (proton donor) is an active-site residue. Substrate-binding positions include 101 to 102 (IT) and Arg-111.

Belongs to the type-II 3-dehydroquinase family. In terms of assembly, homododecamer. Adopts a ring-like structure, composed of an arrangement of two hexameric rings stacked on top of one another.

It catalyses the reaction 3-dehydroquinate = 3-dehydroshikimate + H2O. The protein operates within aromatic compound metabolism; 3,4-dihydroxybenzoate biosynthesis; 3,4-dihydroxybenzoate from 3-dehydroquinate: step 1/2. Its function is as follows. Is involved in the catabolism of quinate. Allows the utilization of quinate as carbon source via the beta-ketoadipate pathway. In Aspergillus terreus (strain NIH 2624 / FGSC A1156), this protein is Catabolic 3-dehydroquinase 2.